A 237-amino-acid polypeptide reads, in one-letter code: Synapse differentiation-inducing gene protein 1-like (237 aa).

Disordered regions lie at residues 1–23, 84–111, and 127–148; these read MESL…HRPY, AGSC…PGQA, and ELQG…ESEC. At 1–161 the chain is on the extracellular side; sequence MESLSELQNP…FLTLPPRDHL (161 aa). Residues 129–148 show a composition bias toward acidic residues; that stretch reads QGQEDSQEEESDGTSSESEC. A helical membrane pass occupies residues 162 to 182; the sequence is GLTLFSMLCCFWPLGIAAFYF. Residues 183 to 204 lie on the Cytoplasmic side of the membrane; the sequence is SQGTSKAISKGDFRLASTTSRR. The helical transmembrane segment at 205 to 225 threads the bilayer; it reads ALFLATLSIAVGAGLYVAVVV. Over 226–237 the chain is Extracellular; sequence ALAAYMSQNGHG.

The protein belongs to the CD225/Dispanin family. As to expression, expression is restricted to the caudate-putamen. Down-regulated in R6/2 transgenic mice, a model for Huntington disease.

The protein localises to the membrane. The protein resides in the golgi apparatus. It is found in the cis-Golgi network. The chain is Synapse differentiation-inducing gene protein 1-like (Syndig1l) from Mus musculus (Mouse).